The following is a 384-amino-acid chain: Guanine nucleotide-binding protein alpha-1 subunit (384 aa).

Residues 1-22 (MGSLCSRNKHYSQADDEENTQT) are disordered. Glycine 2 carries N-myristoyl glycine lipidation. Cysteine 5 carries S-palmitoyl cysteine lipidation. The 347-residue stretch at 38-384 (HIQKLLLLGA…RRNLFEAGLL (347 aa)) folds into the G-alpha domain. A G1 motif region spans residues 41 to 54 (KLLLLGAGDSGKST). Residues aspartate 49, serine 50, glycine 51, lysine 52, serine 53, threonine 54, aspartate 163, leucine 188, threonine 194, glycine 222, asparagine 288, lysine 289, aspartate 291, and alanine 356 each coordinate GTP. Mg(2+) is bound at residue serine 53. Residues 186–194 (DVLFARIRT) form a G2 motif region. Threonine 194 contributes to the Mg(2+) binding site. Residues 215–224 (YRLFDVGGQR) are G3 motif. A G4 motif region spans residues 284–291 (MLFLNKFD). The G5 motif stretch occupies residues 354-359 (TTALDQ).

It belongs to the G-alpha family. As to quaternary structure, g proteins are composed of 3 units; alpha, beta and gamma. The alpha chain contains the guanine nucleotide binding site. Mg(2+) is required as a cofactor.

Its function is as follows. Guanine nucleotide-binding proteins (G proteins) are involved as modulators or transducers in various transmembrane signaling systems. The chain is Guanine nucleotide-binding protein alpha-1 subunit (GPA1) from Solanum lycopersicum (Tomato).